Here is a 795-residue protein sequence, read N- to C-terminus: Outer membrane protein assembly factor BamA (795 aa).

Positions M1 to A19 are cleaved as a signal peptide. POTRA domains lie at F22 to K89, S90 to D170, A173 to G259, Y262 to G341, and L344 to R418.

Belongs to the BamA family. In terms of assembly, part of the Bam complex.

It localises to the cell outer membrane. Its function is as follows. Part of the outer membrane protein assembly complex, which is involved in assembly and insertion of beta-barrel proteins into the outer membrane. The polypeptide is Outer membrane protein assembly factor BamA (Haemophilus influenzae (strain ATCC 51907 / DSM 11121 / KW20 / Rd)).